Consider the following 609-residue polypeptide: Protein KINESIN LIGHT CHAIN-RELATED 1 (609 aa).

A disordered region spans residues 1 to 77; the sequence is MPAMPGLVSV…TAAVIDVDDP (77 aa). Positions 38–55 are enriched in low complexity; that stretch reads KKTPSSTPSRSKPSPNRS. TPR repeat units follow at residues 140–173, 183–216, 225–258, 267–301, 307–340, 349–382, 392–425, 433–466, 474–507, and 516–549; these read AMSLHVLAAIYCSLGRFDEAVPPLERAIQVPDPT, FSGHMQLGDTLSMLGQIDRSIACYEEGLKIQIQT, GETCRYLAEAYVQAMQFNKAEELCKKTLEIHRAH, AADRRLMAIICEAKGDYENALEHLVLASMAMIASG, ASIDVSIGNIYMSLCRFDEAVFSYQKALTVFKAS, ASVFVRLAELYHRTGKLRESKSYCENALRIYNKP, AGGLTEISAIYESVDEPEEALKLLQKSMKLLEDK, AGLEARMGVMYYTVGRYEDARNAFESAVTKLRAA, GVVLNQMGLACVQLFKIDEAGELFEEARGILEQE, and LGVYSNLAATYDAMGRIEDAIEILEQVLKLREEK. A disordered region spans residues 582–609; that stretch reads LQNLIDPNARPPKKESSAKKWPSLGFKF.

The protein belongs to the kinesin light chain family. Interacts with IQD1.

It is found in the cytoplasm. The protein resides in the cytoskeleton. This chain is Protein KINESIN LIGHT CHAIN-RELATED 1, found in Arabidopsis thaliana (Mouse-ear cress).